Reading from the N-terminus, the 189-residue chain is Holliday junction branch migration complex subunit RuvA (189 aa).

Residues 1–63 (MIHALNGKVE…DDGISLYGFL (63 aa)) are domain I. Residues 64–135 (EVIKLKLFEK…ELKDTIKELD (72 aa)) form a domain II region. The flexible linker stretch occupies residues 135-139 (DVSIN). The tract at residues 140–189 (EKDRKVLEAIEALVTLGFNRNQAKKAVNKVAAKDDKLDDIIKKALRFLSR) is domain III.

This sequence belongs to the RuvA family. As to quaternary structure, homotetramer. Forms an RuvA(8)-RuvB(12)-Holliday junction (HJ) complex. HJ DNA is sandwiched between 2 RuvA tetramers; dsDNA enters through RuvA and exits via RuvB. An RuvB hexamer assembles on each DNA strand where it exits the tetramer. Each RuvB hexamer is contacted by two RuvA subunits (via domain III) on 2 adjacent RuvB subunits; this complex drives branch migration. In the full resolvosome a probable DNA-RuvA(4)-RuvB(12)-RuvC(2) complex forms which resolves the HJ.

The protein resides in the cytoplasm. Functionally, the RuvA-RuvB-RuvC complex processes Holliday junction (HJ) DNA during genetic recombination and DNA repair, while the RuvA-RuvB complex plays an important role in the rescue of blocked DNA replication forks via replication fork reversal (RFR). RuvA specifically binds to HJ cruciform DNA, conferring on it an open structure. The RuvB hexamer acts as an ATP-dependent pump, pulling dsDNA into and through the RuvAB complex. HJ branch migration allows RuvC to scan DNA until it finds its consensus sequence, where it cleaves and resolves the cruciform DNA. The protein is Holliday junction branch migration complex subunit RuvA of Thermosipho africanus (strain TCF52B).